Consider the following 127-residue polypeptide: Cyclin-dependent kinase 2-associated protein 2 (127 aa).

The disordered stretch occupies residues 1–49; the sequence is MSYKPIAPAPSSTPGSSTPGPGTPVPTAGSVPSPSGSVPGAAGPFRPLF. The segment covering 9 to 44 has biased composition (low complexity); that stretch reads APSSTPGSSTPGPGTPVPTAGSVPSPSGSVPGAAGP. An interaction with CDK2 region spans residues 65–107; sequence PPGAQGSQSTYTDLLSVIEEMGKEIRPTYAGSKSAMERLKRGI.

This sequence belongs to the CDK2AP family. Component of the nucleosome remodeling and deacetylase (NuRD) repressor complex, composed of core proteins MTA1, MTA2, MTA3, RBBP4, RBBP7, HDAC1, HDAC2, MBD2, MBD3, and peripherally associated proteins CDK2AP1, CDK2AP2, GATAD2A, GATAD2B, CHD3, CHD4 and CHD5. The exact stoichiometry of the NuRD complex is unknown, and some subunits such as MBD2 and MBD3, GATAD2A and GATAD2B, and CHD3, CHD4 and CHD5 define mutually exclusive NuRD complexes. Interacts with CDK2AP1. Interacts with CDK2. Interacts with MAPK1. Phosphorylated by MAPK1 and CDK2.

It localises to the cytoplasm. Its subcellular location is the nucleus. Acts as a component of the histone deacetylase NuRD complex which participates in the remodeling of chromatin. Inhibits cell cycle G1/S phase transition by repressing CDK2 expression and activation; represses CDK2 activation by inhibiting its interaction with cyclin E and A. Plays a role in regulating the self-renewal of embryonic stem cells (ESCs) and in maintaining cell survival during terminal differentiation of ESCs. Regulates microtubule organization of metaphase II oocytes. The protein is Cyclin-dependent kinase 2-associated protein 2 (CDK2AP2) of Bos taurus (Bovine).